We begin with the raw amino-acid sequence, 90 residues long: Small ribosomal subunit protein uS15 (90 aa).

Belongs to the universal ribosomal protein uS15 family. Part of the 30S ribosomal subunit. Forms a bridge to the 50S subunit in the 70S ribosome, contacting the 23S rRNA.

One of the primary rRNA binding proteins, it binds directly to 16S rRNA where it helps nucleate assembly of the platform of the 30S subunit by binding and bridging several RNA helices of the 16S rRNA. In terms of biological role, forms an intersubunit bridge (bridge B4) with the 23S rRNA of the 50S subunit in the ribosome. This Paraburkholderia xenovorans (strain LB400) protein is Small ribosomal subunit protein uS15.